Consider the following 282-residue polypeptide: NADPH-dependent 7-cyano-7-deazaguanine reductase (282 aa).

A substrate-binding site is contributed by 88–90; the sequence is IES. Residue 90–91 participates in NADPH binding; that stretch reads SK. The Thioimide intermediate role is filled by C190. D197 (proton donor) is an active-site residue. 229–230 serves as a coordination point for substrate; sequence HE. An NADPH-binding site is contributed by 258-259; that stretch reads RG.

It belongs to the GTP cyclohydrolase I family. QueF type 2 subfamily. In terms of assembly, homodimer.

It localises to the cytoplasm. It catalyses the reaction 7-aminomethyl-7-carbaguanine + 2 NADP(+) = 7-cyano-7-deazaguanine + 2 NADPH + 3 H(+). It functions in the pathway tRNA modification; tRNA-queuosine biosynthesis. Its function is as follows. Catalyzes the NADPH-dependent reduction of 7-cyano-7-deazaguanine (preQ0) to 7-aminomethyl-7-deazaguanine (preQ1). In Escherichia coli O45:K1 (strain S88 / ExPEC), this protein is NADPH-dependent 7-cyano-7-deazaguanine reductase.